Reading from the N-terminus, the 679-residue chain is MPSEVTPKVPERPSRRKTSELFPLSGSESGDIKANSEPPTPAGTPNVPTRRPILKAKTMTSFESGMDQESLPKVPLQRPVRRSTTEELNNVMNNTSKELEEIESLISKHNIHSVSRKKSPTSVQEGKAAAIHQNGQRSASDNKTSTNPSPLEKNEHKGDEGNESAISPSNSVNKSNNEVTEHSDSEDLTEKQKVHAALDNEAGDGSHFEEKLIPGDMKVPVDVSKDVEEGSLNALPPSGITESDDKAEKFTKHPESSLEELQKHQEQQEEKIFQNPTDEESTTSLNEKQEGKDNMEVNSQPQGPSDTETVIAATSSNVPSQIASEEENDVPVIPRSRPKKDFEAHVQKEELPNTQEKLVSEECDSTLISTEEESKIPKIPSERPKRRAPPPVPKKPSSRIAAFQEMLQKQQQQDLHNNGNSSATTASADIAKKHTDSSITSDTTKADFTSKLNGLFALPGMVNPGQLPPSLEKKLSSPDTESKLGTQDQSQAKTGPLGGTRRGRGPRGRKLPSKVASVEKIEEDDNTNKIEIFNNWNVSSSFSKEKILMDTTPGEQAERALDEKSKSIPEEQREQSPNKMEAALCPFELDEQEKLPANAESDPLSQLPQTNAVGNRKAISEESLSPSEAIANRDQNDTTEIQEQQMEDQMEVDMERELSGGYEDVDSALHSEEASFHSL.

Positions 1–95 (MPSEVTPKVP…EELNNVMNNT (95 aa)) are disordered. Positions 9–19 (VPERPSRRKTS) are enriched in basic and acidic residues. Residue Thr18 is modified to Phosphothreonine. At Ser36 the chain carries Phosphoserine. Thr58 carries the post-translational modification Phosphothreonine. Ser70 carries the phosphoserine modification. Thr85 bears the Phosphothreonine mark. A compositionally biased stretch (polar residues) spans 86–95 (EELNNVMNNT). Ser104 carries the post-translational modification Phosphoserine. Disordered stretches follow at residues 107 to 522 (SKHN…EKIE) and 548 to 679 (LMDT…FHSL). Over residues 109–119 (HNIHSVSRKKS) the composition is skewed to basic residues. 2 stretches are compositionally biased toward polar residues: residues 133–149 (QNGQ…TNPS) and 164–178 (SAIS…SNNE). The span at 179–213 (VTEHSDSEDLTEKQKVHAALDNEAGDGSHFEEKLI) shows a compositional bias: basic and acidic residues. 3 positions are modified to phosphoserine: Ser183, Ser206, and Ser231. The segment covering 243–272 (SDDKAEKFTKHPESSLEELQKHQEQQEEKI) has biased composition (basic and acidic residues). Phosphothreonine is present on Thr277. A Phosphoserine modification is found at Ser284. A compositionally biased stretch (polar residues) spans 296-323 (EVNSQPQGPSDTETVIAATSSNVPSQIA). Ser324 carries the post-translational modification Phosphoserine. Basic and acidic residues-rich tracts occupy residues 339 to 351 (KKDF…KEEL) and 372 to 383 (EESKIPKIPSER). Residues 383-396 (RPKRRAPPPVPKKP) are interaction with SH3 domain of ABP1. 2 stretches are compositionally biased toward polar residues: residues 414–427 (DLHN…TTAS) and 437–452 (SSIT…TSKL). Positions 471 to 482 (LEKKLSSPDTES) are enriched in basic and acidic residues. Residues 483-492 (KLGTQDQSQA) show a composition bias toward polar residues. The span at 501-512 (RRGRGPRGRKLP) shows a compositional bias: basic residues. The residue at position 552 (Thr552) is a Phosphothreonine. Over residues 556–576 (QAERALDEKSKSIPEEQREQS) the composition is skewed to basic and acidic residues. Residue Ser576 is modified to Phosphoserine. Over residues 603–613 (PLSQLPQTNAV) the composition is skewed to polar residues. 8 positions are modified to phosphoserine: Ser620, Ser623, Ser625, Ser627, Ser667, Ser671, Ser675, and Ser678. The segment covering 667 to 679 (SALHSEEASFHSL) has biased composition (basic and acidic residues).

The protein belongs to the AIM21 family. As to quaternary structure, interacts with ribosomes. Interacts with ABP1.

It is found in the cytoplasm. The protein resides in the cytoskeleton. Its subcellular location is the actin patch. Involved in mitochondrial migration along actin filaments. In Saccharomyces cerevisiae (strain YJM789) (Baker's yeast), this protein is Altered inheritance of mitochondria protein 21 (AIM21).